Reading from the N-terminus, the 83-residue chain is Molybdopterin synthase sulfur carrier subunit (83 aa).

Glycine 83 is modified (1-thioglycine; alternate). Glycine 83 carries the post-translational modification Glycyl adenylate; alternate.

The protein belongs to the MoaD family. MOCS2A subfamily. As to quaternary structure, heterotetramer; composed of 2 small (MOCS2A) and 2 large (MOCS2B) subunits. In terms of processing, C-terminal thiocarboxylation occurs in 2 steps, it is first acyl-adenylated (-COAMP) via the hesA/moeB/thiF part of MOCS3, then thiocarboxylated (-COSH) via the rhodanese domain of MOCS3.

Its subcellular location is the cytoplasm. The protein operates within cofactor biosynthesis; molybdopterin biosynthesis. In terms of biological role, acts as a sulfur carrier required for molybdopterin biosynthesis. Component of the molybdopterin synthase complex that catalyzes the conversion of precursor Z into molybdopterin by mediating the incorporation of 2 sulfur atoms into precursor Z to generate a dithiolene group. In the complex, serves as sulfur donor by being thiocarboxylated (-COSH) at its C-terminus by MOCS3. After interaction with MOCS2B, the sulfur is then transferred to precursor Z to form molybdopterin. The polypeptide is Molybdopterin synthase sulfur carrier subunit (Chlamydomonas reinhardtii (Chlamydomonas smithii)).